A 760-amino-acid polypeptide reads, in one-letter code: Catecholate siderophore receptor Fiu (760 aa).

A signal peptide spans 1–31 (MENNRNFPARQFHSLTFFAGLCIGITPVAQA). Residues 67-175 (PVADTTRTMT…PTGSINMISK (109 aa)) enclose the TBDR plug domain. Residues 180-760 (DSGIDASASI…TFLLTANMHF (581 aa)) enclose the TBDR beta-barrel domain. Residues 743 to 760 (RYHPGEPRTFLLTANMHF) carry the TonB C-terminal box motif.

The protein belongs to the TonB-dependent receptor family.

Its subcellular location is the cell outer membrane. Its function is as follows. Involved in the active transport across the outer membrane of iron complexed with catecholate siderophores such as dihydroxybenzoylserine and dihydroxybenzoate. It derives its energy for transport by interacting with the trans-periplasmic membrane protein TonB. Can also transport catechol-substituted cephalosporins. Receptor for microcins M, H47 and E492. This chain is Catecholate siderophore receptor Fiu (fiu), found in Escherichia coli O157:H7.